Reading from the N-terminus, the 406-residue chain is Membrane protein UL43 homolog (406 aa).

The next 10 membrane-spanning stretches (helical) occupy residues 48–68 (LFLV…QYHV), 71–91 (AAVN…PTSV), 103–123 (CLQT…CPIS), 126–146 (LPFV…VAAV), 162–182 (IYFY…VILY), 188–208 (YEVL…VDAA), 266–286 (SVIP…SHII), 299–319 (LAVS…AVLY), 339–359 (IAVT…STVA), and 386–406 (VYHV…TYVS).

The protein belongs to the alphaherpesvirinae HHV-1 UL43 family.

Its subcellular location is the membrane. The sequence is that of Membrane protein UL43 homolog from Varicella-zoster virus (strain Dumas) (HHV-3).